Consider the following 130-residue polypeptide: uncharacterized protein (130 aa).

The N-terminal stretch at 1-23 is a signal peptide; it reads MINRKVVYALSALLLFVYSYAFI.

This is an uncharacterized protein from Aquifex aeolicus (strain VF5).